A 401-amino-acid chain; its full sequence is Acetate kinase (401 aa).

Residue Asn-9 participates in Mg(2+) binding. Lys-16 is an ATP binding site. Arg-88 lines the substrate pocket. The Proton donor/acceptor role is filled by Asp-147. ATP is bound by residues 207 to 211 (HLGNG), 282 to 284 (DCR), and 333 to 337 (GIGEN). Residue Glu-388 coordinates Mg(2+).

It belongs to the acetokinase family. In terms of assembly, homodimer. It depends on Mg(2+) as a cofactor. Requires Mn(2+) as cofactor.

It is found in the cytoplasm. It catalyses the reaction acetate + ATP = acetyl phosphate + ADP. The protein operates within metabolic intermediate biosynthesis; acetyl-CoA biosynthesis; acetyl-CoA from acetate: step 1/2. Catalyzes the formation of acetyl phosphate from acetate and ATP. Can also catalyze the reverse reaction. In Haemophilus influenzae (strain PittGG), this protein is Acetate kinase.